Here is a 156-residue protein sequence, read N- to C-terminus: Adult-specific rigid cuticular protein 15.5 (156 aa).

Positions 23–84 (IGNYAFNYGT…SVKTNEPGTA (62 aa)) constitute a Chitin-binding type R&amp;R domain.

Its function is as follows. Component of the rigid cuticle of the spider. The polypeptide is Adult-specific rigid cuticular protein 15.5 (Araneus diadematus (European garden spider)).